The following is a 170-amino-acid chain: Metalloproteinase inhibitor 4 (170 aa).

The NTR domain occupies 1-105; sequence ISSEKVVPAS…SLNHHYHLNC (105 aa). 2 involved in metalloproteinase-binding regions span residues 6–9 and 48–49; these read VVPA and SS. 3 disulfides stabilise this stretch: Cys-107/Cys-154, Cys-112/Cys-117, and Cys-125/Cys-146.

Belongs to the protease inhibitor I35 (TIMP) family.

It is found in the secreted. Its function is as follows. Complexes with metalloproteinases (such as collagenases) and irreversibly inactivates them by binding to their catalytic zinc cofactor. The protein is Metalloproteinase inhibitor 4 (TIMP4) of Oryctolagus cuniculus (Rabbit).